The chain runs to 190 residues: B3 domain-containing protein Os02g0764100 (190 aa).

A DNA-binding region (TF-B3) is located at residues 17 to 121 (FEKAVTPSDV…KLLFIDCKKN (105 aa)).

It localises to the nucleus. The protein is B3 domain-containing protein Os02g0764100 of Oryza sativa subsp. japonica (Rice).